Here is a 76-residue protein sequence, read N- to C-terminus: Exodeoxyribonuclease 7 small subunit (76 aa).

This sequence belongs to the XseB family. As to quaternary structure, heterooligomer composed of large and small subunits.

It localises to the cytoplasm. The catalysed reaction is Exonucleolytic cleavage in either 5'- to 3'- or 3'- to 5'-direction to yield nucleoside 5'-phosphates.. Bidirectionally degrades single-stranded DNA into large acid-insoluble oligonucleotides, which are then degraded further into small acid-soluble oligonucleotides. This chain is Exodeoxyribonuclease 7 small subunit, found in Geobacter sulfurreducens (strain ATCC 51573 / DSM 12127 / PCA).